The chain runs to 102 residues: Aspartyl/glutamyl-tRNA(Asn/Gln) amidotransferase subunit C (102 aa).

It belongs to the GatC family. As to quaternary structure, heterotrimer of A, B and C subunits.

It catalyses the reaction L-glutamyl-tRNA(Gln) + L-glutamine + ATP + H2O = L-glutaminyl-tRNA(Gln) + L-glutamate + ADP + phosphate + H(+). The catalysed reaction is L-aspartyl-tRNA(Asn) + L-glutamine + ATP + H2O = L-asparaginyl-tRNA(Asn) + L-glutamate + ADP + phosphate + 2 H(+). Functionally, allows the formation of correctly charged Asn-tRNA(Asn) or Gln-tRNA(Gln) through the transamidation of misacylated Asp-tRNA(Asn) or Glu-tRNA(Gln) in organisms which lack either or both of asparaginyl-tRNA or glutaminyl-tRNA synthetases. The reaction takes place in the presence of glutamine and ATP through an activated phospho-Asp-tRNA(Asn) or phospho-Glu-tRNA(Gln). This chain is Aspartyl/glutamyl-tRNA(Asn/Gln) amidotransferase subunit C, found in Lactobacillus acidophilus (strain ATCC 700396 / NCK56 / N2 / NCFM).